The chain runs to 158 residues: NAD(P)H-quinone oxidoreductase subunit J, chloroplastic (158 aa).

Belongs to the complex I 30 kDa subunit family. NDH is composed of at least 16 different subunits, 5 of which are encoded in the nucleus.

It localises to the plastid. It is found in the chloroplast thylakoid membrane. The enzyme catalyses a plastoquinone + NADH + (n+1) H(+)(in) = a plastoquinol + NAD(+) + n H(+)(out). It carries out the reaction a plastoquinone + NADPH + (n+1) H(+)(in) = a plastoquinol + NADP(+) + n H(+)(out). NDH shuttles electrons from NAD(P)H:plastoquinone, via FMN and iron-sulfur (Fe-S) centers, to quinones in the photosynthetic chain and possibly in a chloroplast respiratory chain. The immediate electron acceptor for the enzyme in this species is believed to be plastoquinone. Couples the redox reaction to proton translocation, and thus conserves the redox energy in a proton gradient. The sequence is that of NAD(P)H-quinone oxidoreductase subunit J, chloroplastic from Coffea arabica (Arabian coffee).